Reading from the N-terminus, the 480-residue chain is 6-phosphogluconate dehydrogenase, decarboxylating (480 aa).

Residues 11–16 (GLAVMG), 34–36 (NRS), 76–78 (IKA), and Asn104 contribute to the NADP(+) site. Substrate is bound by residues Asn104 and 130–132 (SGG). Catalysis depends on Lys184, which acts as the Proton acceptor. A substrate-binding site is contributed by 187–188 (HN). Residue Glu191 is the Proton donor of the active site. 5 residues coordinate substrate: Tyr192, Lys261, Arg288, Arg448, and His454.

It belongs to the 6-phosphogluconate dehydrogenase family. In terms of assembly, homodimer.

It carries out the reaction 6-phospho-D-gluconate + NADP(+) = D-ribulose 5-phosphate + CO2 + NADPH. Its pathway is carbohydrate degradation; pentose phosphate pathway; D-ribulose 5-phosphate from D-glucose 6-phosphate (oxidative stage): step 3/3. Functionally, catalyzes the oxidative decarboxylation of 6-phosphogluconate to ribulose 5-phosphate and CO(2), with concomitant reduction of NADP to NADPH. This is 6-phosphogluconate dehydrogenase, decarboxylating (gnd) from Chlamydia trachomatis serovar D (strain ATCC VR-885 / DSM 19411 / UW-3/Cx).